The following is a 326-amino-acid chain: Regulation of nuclear pre-mRNA domain-containing protein 1B (326 aa).

The residue at position 2 (Ser-2) is an N-acetylserine. The region spanning 2–133 (SSFSESALEK…QLKLSMEDSK (132 aa)) is the CID domain. Residues 127–149 (LSMEDSKSPPPKATEEKKSLKRT) are disordered. Basic and acidic residues predominate over residues 128-144 (SMEDSKSPPPKATEEKK). Phosphoserine is present on residues Ser-132 and Ser-134. Tyr-161 bears the Phosphotyrosine mark. Phosphoserine occurs at positions 166 and 299.

Belongs to the UPF0400 (RTT103) family. Homodimer. May form a heterodimer with RPRD1A. Associates with RPAP2. Associates with the RNA polymerase II complex. As to expression, preferentially expressed in a range of tumor tissues including colon, lung, liver, breast, prostate, stomach, uterine endometrium and cervical cancers with higher levels in tumors than in adjacent non-tumor tissue (at protein level).

The protein resides in the nucleus. Functionally, interacts with phosphorylated C-terminal heptapeptide repeat domain (CTD) of the largest RNA polymerase II subunit POLR2A, and participates in dephosphorylation of the CTD by RPAP2. Transcriptional regulator which enhances expression of CCND1. Promotes binding of RNA polymerase II to the CCDN1 promoter and to the termination region before the poly-A site but decreases its binding after the poly-A site. Prevents RNA polymerase II from reading through the 3' end termination site and may allow it to be recruited back to the promoter through promotion of the formation of a chromatin loop. Also enhances the transcription of a number of other cell cycle-related genes including CDK2, CDK4, CDK6 and cyclin-E but not CDKN1A, CDKN1B or cyclin-A. Promotes cell proliferation. The polypeptide is Regulation of nuclear pre-mRNA domain-containing protein 1B (RPRD1B) (Homo sapiens (Human)).